The primary structure comprises 384 residues: Guanine nucleotide-binding protein alpha-1 subunit (384 aa).

The segment at 1–22 (MGSLCSRNKHYSQADDEENTQT) is disordered. Gly-2 is lipidated: N-myristoyl glycine. Cys-5 is lipidated: S-palmitoyl cysteine. The region spanning 38-384 (HIQKLLLLGA…RRNLFEAGLL (347 aa)) is the G-alpha domain. The tract at residues 41–54 (KLLLLGAGDSGKST) is G1 motif. Positions 49, 50, 51, 52, 53, 54, 163, 188, 194, 222, 288, 289, 291, and 356 each coordinate GTP. Ser-53 is a binding site for Mg(2+). The interval 186-194 (DVLFARIRT) is G2 motif. Thr-194 is a binding site for Mg(2+). The G3 motif stretch occupies residues 215 to 224 (YRLFDVGGQR). The segment at 284–291 (MLFLNKFD) is G4 motif. The segment at 354–359 (TTALDQ) is G5 motif.

It belongs to the G-alpha family. G proteins are composed of 3 units; alpha, beta and gamma. The alpha chain contains the guanine nucleotide binding site. Requires Mg(2+) as cofactor.

Functionally, guanine nucleotide-binding proteins (G proteins) are involved as modulators or transducers in various transmembrane signaling systems. The sequence is that of Guanine nucleotide-binding protein alpha-1 subunit (GPA1) from Solanum lycopersicum (Tomato).